We begin with the raw amino-acid sequence, 460 residues long: Interleukin-1 receptor-associated kinase 4 (460 aa).

Residue Met1 is modified to N-acetylmethionine. In terms of domain architecture, Death spans 20-104 (RKLSDFIDPQ…APASLLLPDA (85 aa)). Lys34 bears the N6-acetyllysine mark. The Protein kinase domain occupies 186-454 (SVGGNKMGEG…PDIKKVQQLL (269 aa)). Residues 192–200 (MGEGGFGVV) and Lys213 contribute to the ATP site. Asp311 acts as the Proton acceptor in catalysis. ATP contacts are provided by residues 313-316 (KSAN) and Asp329. Phosphothreonine occurs at positions 342 and 345. A Phosphoserine modification is found at Ser346.

This sequence belongs to the protein kinase superfamily. TKL Ser/Thr protein kinase family. Pelle subfamily. As to quaternary structure, associates with MYD88 and IRAK2 to form a ternary complex called the Myddosome. Once phosphorylated, IRAK4 dissociates from the receptor complex and then associates with the TNF receptor-associated factor 6 (TRAF6), IRAK1, and PELI1; this intermediate complex is required for subsequent NF-kappa-B activation. Direct binding of SMAD6 to PELI1 prevents complex formation and hence negatively regulates IL1R-TLR signaling and eventually NF-kappa-B-mediated gene expression. Interacts with IL1RL1. Interacts (when phosphorylated) with IRAK1. May interact (when phosphorylated) with IRAK3. The cofactor is Mg(2+). In terms of processing, phosphorylated.

It localises to the cytoplasm. It carries out the reaction L-seryl-[protein] + ATP = O-phospho-L-seryl-[protein] + ADP + H(+). The enzyme catalyses L-threonyl-[protein] + ATP = O-phospho-L-threonyl-[protein] + ADP + H(+). Serine/threonine-protein kinase that plays a critical role in initiating innate immune response against foreign pathogens. Involved in Toll-like receptor (TLR) and IL-1R signaling pathways. Is rapidly recruited by MYD88 to the receptor-signaling complex upon TLR activation to form the Myddosome together with IRAK2. Phosphorylates initially IRAK1, thus stimulating the kinase activity and intensive autophosphorylation of IRAK1. Phosphorylates E3 ubiquitin ligases Pellino proteins (PELI1, PELI2 and PELI3) to promote pellino-mediated polyubiquitination of IRAK1. Then, the ubiquitin-binding domain of IKBKG/NEMO binds to polyubiquitinated IRAK1 bringing together the IRAK1-MAP3K7/TAK1-TRAF6 complex and the NEMO-IKKA-IKKB complex. In turn, MAP3K7/TAK1 activates IKKs (CHUK/IKKA and IKBKB/IKKB) leading to NF-kappa-B nuclear translocation and activation. Alternatively, phosphorylates TIRAP to promote its ubiquitination and subsequent degradation. Phosphorylates NCF1 and regulates NADPH oxidase activation after LPS stimulation suggesting a similar mechanism during microbial infections. The protein is Interleukin-1 receptor-associated kinase 4 (IRAK4) of Homo sapiens (Human).